We begin with the raw amino-acid sequence, 293 residues long: Bifunctional protein FolD (293 aa).

Residues 164–166 (GRS), Ser-193, and Thr-234 contribute to the NADP(+) site.

The protein belongs to the tetrahydrofolate dehydrogenase/cyclohydrolase family. Homodimer.

The catalysed reaction is (6R)-5,10-methylene-5,6,7,8-tetrahydrofolate + NADP(+) = (6R)-5,10-methenyltetrahydrofolate + NADPH. The enzyme catalyses (6R)-5,10-methenyltetrahydrofolate + H2O = (6R)-10-formyltetrahydrofolate + H(+). It functions in the pathway one-carbon metabolism; tetrahydrofolate interconversion. Its function is as follows. Catalyzes the oxidation of 5,10-methylenetetrahydrofolate to 5,10-methenyltetrahydrofolate and then the hydrolysis of 5,10-methenyltetrahydrofolate to 10-formyltetrahydrofolate. In Bacteroides thetaiotaomicron (strain ATCC 29148 / DSM 2079 / JCM 5827 / CCUG 10774 / NCTC 10582 / VPI-5482 / E50), this protein is Bifunctional protein FolD.